Reading from the N-terminus, the 755-residue chain is Oligopeptide transporter 1 (755 aa).

13 helical membrane passes run 58–78 (TWTL…FFGF), 82–102 (QLWV…KLMA), 134–154 (ITIF…ITIV), 165–185 (AAAM…AGIF), 226–246 (FFII…YLFP), 298–318 (FFAI…VLPI), 370–390 (YLSV…CATI), 434–454 (WWFI…CEGF), 462–482 (WWGL…IGVI), 546–566 (FIVQ…TTWW), 614–634 (GIYP…VPFW), 664–684 (AKAV…YYIF), and 697–717 (ILSA…FFAF).

Belongs to the oligopeptide OPT transporter (TC 2.A.67.1) family. Highly expressed in flowers, and moderately expressed in leaves and stems.

The protein localises to the membrane. In terms of biological role, involved in the translocation of tetra- and pentapeptides across the cellular membrane in an energy-dependent manner. This Arabidopsis thaliana (Mouse-ear cress) protein is Oligopeptide transporter 1 (OPT1).